A 1508-amino-acid polypeptide reads, in one-letter code: Pleiotropic ABC efflux transporter of multiple drugs CDR1 (1508 aa).

The disordered stretch occupies residues 1–30; sequence MSEKPFVDAPPPEDGVAHQVSPHDNGSLSE. The Cytoplasmic portion of the chain corresponds to 1 to 524; sequence MSEKPFVDAP…NFLRMKGDPS (524 aa). Residues 165–415 enclose the ABC transporter 1 domain; that stretch reads DYWHDMRKID…FLDMGYECPQ (251 aa). The helical transmembrane segment at 525–545 threads the bilayer; sequence IVIFSIFGQGVMGLILSSVFY. At 546–559 the chain is on the extracellular side; that stretch reads NLQPTTGSFYYRGA. Residues 560-580 traverse the membrane as a helical segment; the sequence is AMFFAVLFNAFASLLEIMSLF. The Cytoplasmic portion of the chain corresponds to 581–608; it reads EARPIVEKHKKYALYRPSADALASIISE. Residues 609 to 629 traverse the membrane as a helical segment; sequence LPVKLCMSTCFNFSFYFMVHF. Topologically, residues 630 to 633 are extracellular; the sequence is RRDP. Residues 634–654 traverse the membrane as a helical segment; sequence GRFFFYWLFCGLCTLCMSHMF. Residues 655–673 lie on the Cytoplasmic side of the membrane; that stretch reads RSLGAVSTSLAAAMTPATS. Residues 674–694 form a helical membrane-spanning segment; it reads VLLAMVIFTGFVIPIPSMLGW. At 695 to 775 the chain is on the extracellular side; sequence CRWIQYINPV…EYVNAHKWRN (81 aa). The chain crosses the membrane as a helical span at residues 776-796; that stretch reads LGIVVAYIVVFLGVYIALTEF. The Cytoplasmic portion of the chain corresponds to 797 to 1203; the sequence is NKGAMQKGEI…TFQQYWRSPG (407 aa). The interval 839–860 is disordered; that stretch reads KISYSDAMEKDSGESSTSDDKL. A compositionally biased stretch (basic and acidic residues) spans 845–860; it reads AMEKDSGESSTSDDKL. The region spanning 867–1110 is the ABC transporter 2 domain; that stretch reads FHWKDLTYQV…GLIDYFEKHG (244 aa). An ATP-binding site is contributed by 903–910; sequence GASGAGKT. Residues 1204-1224 form a helical membrane-spanning segment; the sequence is YIYSKFFLVITASLFNGFAFF. The Extracellular segment spans residues 1225-1239; sequence HSGTSQQGLQNQMFS. The chain crosses the membrane as a helical span at residues 1240-1260; it reads MFMFYMPLQTLIQQMLPYYVM. Residues 1261-1288 are Cytoplasmic-facing; it reads QREIYEVREAPSRTFSWFAFIASQITTE. The chain crosses the membrane as a helical span at residues 1289–1309; that stretch reads IPFQVVLGTVAFFCWYYPVGL. The Extracellular portion of the chain corresponds to 1310 to 1326; the sequence is YQNATPTDTVHERGALM. The helical transmembrane segment at 1327 to 1347 threads the bilayer; the sequence is WLLVTAFYVYTISLGQMVVAF. Topologically, residues 1348–1362 are cytoplasmic; it reads MEIADNAANMVNLMF. The helical transmembrane segment at 1363–1383 threads the bilayer; it reads IMCLNFCGVLATPEALPGFWI. The Extracellular portion of the chain corresponds to 1384–1475; that stretch reads FMYRCNPFTY…HAVYSERWRN (92 aa). The helical transmembrane segment at 1476 to 1496 threads the bilayer; it reads FGIFIAFIAINMIGTIFFYWL. At 1497-1508 the chain is on the cytoplasmic side; the sequence is ARVPKSSKSKNH.

The protein belongs to the ABC transporter superfamily.

Its subcellular location is the cell membrane. It catalyses the reaction fluconazole(in) + ATP + H2O = fluconazole(out) + ADP + phosphate + H(+). It carries out the reaction itraconazole(in) + ATP + H2O = itraconazole(out) + ADP + phosphate + H(+). The enzyme catalyses voriconazole(in) + ATP + H2O = voriconazole(out) + ADP + phosphate + H(+). With respect to regulation, the bis-benzodioxolylindolinone azoffluxin acts as an inhibitor of the transporter activity. Clorgyline analogs M19 and M25 inhibit the transcporter activity by uncoupling CDR1 ATPase activity from the active transport of substrates. Activity is also inhibited by beauvericin and oligomycin. Its function is as follows. Pleiotropic ABC efflux transporter that confers resistance to numerous chemicals including itraconazole, fluconazole, voriconazole and posaconazole. The sequence is that of Pleiotropic ABC efflux transporter of multiple drugs CDR1 from Candidozyma auris (Yeast).